A 447-amino-acid polypeptide reads, in one-letter code: Argininosuccinate synthase (447 aa).

ATP-binding positions include 17 to 25 (AFSGGLDTS) and A43. Y99 lines the L-citrulline pocket. G129 and T131 together coordinate ATP. L-aspartate-binding residues include T131, N135, and D136. Position 135 (N135) interacts with L-citrulline. D136 contributes to the ATP binding site. R139 and S192 together coordinate L-citrulline. An ATP-binding site is contributed by D194. 3 residues coordinate L-citrulline: T201, E203, and E280.

Belongs to the argininosuccinate synthase family. Type 2 subfamily. In terms of assembly, homotetramer.

It is found in the cytoplasm. It carries out the reaction L-citrulline + L-aspartate + ATP = 2-(N(omega)-L-arginino)succinate + AMP + diphosphate + H(+). The protein operates within amino-acid biosynthesis; L-arginine biosynthesis; L-arginine from L-ornithine and carbamoyl phosphate: step 2/3. The sequence is that of Argininosuccinate synthase from Escherichia coli O139:H28 (strain E24377A / ETEC).